The sequence spans 384 residues: D-galactosamine-6-phosphate deaminase AgaS (384 aa).

2 consecutive SIS domains span residues 45-197 (LEPL…SQTF) and 215-364 (SEGV…PDTP).

This sequence belongs to the SIS family. AgaS subfamily.

It carries out the reaction D-galactosamine 6-phosphate + H2O = D-tagatopyranose 1-phosphate + NH4(+). Catalyzes the isomerization-deamination of galactosamine 6-phosphate to form tagatofuranose 6-phosphate and ammonium ion. This chain is D-galactosamine-6-phosphate deaminase AgaS, found in Escherichia coli.